A 323-amino-acid polypeptide reads, in one-letter code: Elongation factor P--(R)-beta-lysine ligase (323 aa).

74 to 76 (SPE) contacts substrate. ATP-binding positions include 98–100 (RNE) and N107. Y116 provides a ligand contact to substrate. 242-243 (EL) lines the ATP pocket. E249 provides a ligand contact to substrate. G298 lines the ATP pocket.

It belongs to the class-II aminoacyl-tRNA synthetase family. EpmA subfamily. Homodimer.

It catalyses the reaction D-beta-lysine + L-lysyl-[protein] + ATP = N(6)-((3R)-3,6-diaminohexanoyl)-L-lysyl-[protein] + AMP + diphosphate + H(+). With EpmB is involved in the beta-lysylation step of the post-translational modification of translation elongation factor P (EF-P). Catalyzes the ATP-dependent activation of (R)-beta-lysine produced by EpmB, forming a lysyl-adenylate, from which the beta-lysyl moiety is then transferred to the epsilon-amino group of a conserved specific lysine residue in EF-P. This Vibrio atlanticus (strain LGP32) (Vibrio splendidus (strain Mel32)) protein is Elongation factor P--(R)-beta-lysine ligase.